A 535-amino-acid polypeptide reads, in one-letter code: Large neutral amino acids transporter small subunit 2 (535 aa).

A compositionally biased stretch (basic and acidic residues) spans 1 to 17 (MEEGARHRNNTEKKHPG). A disordered region spans residues 1 to 30 (MEEGARHRNNTEKKHPGGGESDASPEAGSG). Topologically, residues 1-44 (MEEGARHRNNTEKKHPGGGESDASPEAGSGGGGVALKKEIGLVS) are cytoplasmic. Phosphoserine is present on Ser-29. A helical membrane pass occupies residues 45–65 (ACGIIVGNIIGSGIFVSPKGV). L-leucine is bound at residue Ile-53. Residues 66–73 (LENAGSVG) lie on the Extracellular side of the membrane. The chain crosses the membrane as a helical span at residues 74–95 (LALIVWIVTGFITVVGALCYAE). Over 96-116 (LGVTIPKSGGDYSYVKDIFGG) the chain is Cytoplasmic. The helical transmembrane segment at 117-149 (LAGFLRLWIAVLVIYPTNQAVIALTFSNYVLQP) threads the bilayer. Asn-134 lines the L-tryptophan pocket. The Extracellular portion of the chain corresponds to 150–157 (LFPTCFPP). A helical transmembrane segment spans residues 158 to 178 (ESGLRLLAAICLLLLTWVNCS). Topologically, residues 179–181 (SVR) are cytoplasmic. A helical membrane pass occupies residues 182–210 (WATRVQDIFTAGKLLALALIIIMGIVQIC). Residues 211–230 (KGEYFWLEPKNAFENFQEPD) lie on the Extracellular side of the membrane. Residues 231–252 (IGLVALAFLQGSFAYGGWNFLN) form a helical membrane-spanning segment. L-leucine is bound at residue Gly-246. Over 253 to 265 (YVTEELVDPYKNL) the chain is Cytoplasmic. The helical transmembrane segment at 266–287 (PRAIFISIPLVTFVYVFANVAY) threads the bilayer. The Extracellular portion of the chain corresponds to 288–312 (VTAMSPQELLASNAVAVTFGEKLLG). Residues 313-338 (VMAWIMPISVALSTFGGVNGSLFTSS) form a helical membrane-spanning segment. At 339–364 (RLFFAGAREGHLPSVLAMIHVKRCTP) the chain is on the cytoplasmic side. The helical transmembrane segment at 365-382 (IPALLFTCISTLLMLVTS) threads the bilayer. Topologically, residues 383-386 (DMYT) are extracellular. A helical transmembrane segment spans residues 387–408 (LINYVGFINYLFYGVTVAGQIV). Asn-395 lines the L-tryptophan pocket. Residues 409-423 (LRWKKPDIPRPIKIN) lie on the Cytoplasmic side of the membrane. A run of 2 helical transmembrane segments spans residues 424–446 (LLFPIIYLLFWAFLLVFSLWSEP) and 447–466 (VVCGIGLAIMLTGVPVYFLG). Over 467 to 535 (VYWQHKPKCF…DKDVAGQPQP (69 aa)) the chain is Cytoplasmic. The interval 502–535 (SGTEEANEDMEEQQQPMYQPTPTKDKDVAGQPQP) is disordered. The span at 514–523 (QQQPMYQPTP) shows a compositional bias: polar residues.

This sequence belongs to the amino acid-polyamine-organocation (APC) superfamily. L-type amino acid transporter (LAT) (TC 2.A.3.8) family. As to quaternary structure, disulfide-linked heterodimer composed of the catalytic light chain subunit SLC7A8 and the heavy chain subunit SLC3A2. SLC3A2 acts as chaperones for correct plasma membrane trafficking and stabilization of SLC7A8 and modulates the substrate affinity and specificity of SLC7A8. ICAM-1 associates with the heterodimer SLC3A2/SLC7A8; this interaction regulates SLC7A8 activity. In terms of tissue distribution, strongest expression is observed in kidney and moderate expression in placenta and brain, followed by liver, prostate, testis, ovary, lymph node, thymus, spleen, skeletal muscle and heart. Also expressed in fetal liver as well as in the retinal pigment epithelial cell line ARPE-19 and the intestinal epithelial cell line Caco-2.

It localises to the cell membrane. It is found in the basolateral cell membrane. The catalysed reaction is L-histidine(in) + L-phenylalanine(out) = L-histidine(out) + L-phenylalanine(in). It carries out the reaction L-tryptophan(in) + L-phenylalanine(out) = L-tryptophan(out) + L-phenylalanine(in). The enzyme catalyses L-isoleucine(in) + L-phenylalanine(out) = L-isoleucine(out) + L-phenylalanine(in). It catalyses the reaction L-valine(in) + L-phenylalanine(out) = L-valine(out) + L-phenylalanine(in). The catalysed reaction is L-leucine(in) + L-phenylalanine(out) = L-leucine(out) + L-phenylalanine(in). It carries out the reaction L-glutamine(in) + L-phenylalanine(out) = L-glutamine(out) + L-phenylalanine(in). The enzyme catalyses L-cysteine(in) + L-phenylalanine(out) = L-cysteine(out) + L-phenylalanine(in). It catalyses the reaction L-phenylalanine(out) + L-methionine(in) = L-phenylalanine(in) + L-methionine(out). The catalysed reaction is L-leucine(out) + L-methionine(in) = L-leucine(in) + L-methionine(out). It carries out the reaction L-cysteine(out) + L-methionine(in) = L-cysteine(in) + L-methionine(out). The enzyme catalyses S-methylmercury-L-cysteine(out) + L-methionine(in) = S-methylmercury-L-cysteine(in) + L-methionine(out). It catalyses the reaction S-methylmercury-L-cysteine(in) + L-leucine(out) = S-methylmercury-L-cysteine(out) + L-leucine(in). The catalysed reaction is S-methylmercury-L-cysteine(in) + L-phenylalanine(out) = S-methylmercury-L-cysteine(out) + L-phenylalanine(in). It carries out the reaction L-phenylalanine(out) + L-serine(in) = L-phenylalanine(in) + L-serine(out). The enzyme catalyses L-phenylalanine(out) + glycine(in) = L-phenylalanine(in) + glycine(out). It catalyses the reaction L-phenylalanine(out) + L-alanine(in) = L-phenylalanine(in) + L-alanine(out). The catalysed reaction is 3,3'-diiodo-L-thyronine(out) = 3,3'-diiodo-L-thyronine(in). It carries out the reaction 3,3',5-triiodo-L-thyronine(out) = 3,3',5-triiodo-L-thyronine(in). The enzyme catalyses L-dopa(out) + L-phenylalanine(in) = L-dopa(in) + L-phenylalanine(out). With respect to regulation, inhibited by the L-type inhibitor 2-Aminobicyclo-(2,2,1)-heptane-2-carboxylic acid (BCH). Associates with SLC3A2 to form a functional heterodimeric complex that translocates small and large neutral amino acids with broad specificity and a stoichiometry of 1:1. Functions as amino acid antiporter mediating the influx of extracellular essential amino acids mainly in exchange with the efflux of highly concentrated intracellular amino acids. Has relatively symmetrical selectivities but strongly asymmetrical substrate affinities at both the intracellular and extracellular sides of the transporter. This asymmetry allows SLC7A8 to regulate intracellular amino acid pools (mM concentrations) by exchange with external amino acids (uM concentration range), equilibrating the relative concentrations of different amino acids across the plasma membrane instead of mediating their net uptake. May play an essential role in the reabsorption of neutral amino acids from the epithelial cells to the bloodstream in the kidney. Involved in the uptake of methylmercury (MeHg) when administered as the L-cysteine or D,L-homocysteine complexes, and hence plays a role in metal ion homeostasis and toxicity. Involved in the cellular activity of small molecular weight nitrosothiols, via the stereoselective transport of L-nitrosocysteine (L-CNSO) across the transmembrane. Imports the thyroid hormone diiodothyronine (T2) and to a smaller extent triiodothyronine (T3) but not rT 3 or thyroxine (T4). Mediates the uptake of L-DOPA. May participate in auditory function. In Homo sapiens (Human), this protein is Large neutral amino acids transporter small subunit 2.